We begin with the raw amino-acid sequence, 186 residues long: Elongation factor P (186 aa).

The protein belongs to the elongation factor P family.

The protein localises to the cytoplasm. The protein operates within protein biosynthesis; polypeptide chain elongation. In terms of biological role, involved in peptide bond synthesis. Stimulates efficient translation and peptide-bond synthesis on native or reconstituted 70S ribosomes in vitro. Probably functions indirectly by altering the affinity of the ribosome for aminoacyl-tRNA, thus increasing their reactivity as acceptors for peptidyl transferase. The sequence is that of Elongation factor P from Brucella canis (strain ATCC 23365 / NCTC 10854 / RM-666).